We begin with the raw amino-acid sequence, 351 residues long: Putative glycosyltransferase 45 (351 aa).

It belongs to the glycosyltransferase group 1 family.

This Sulfolobus islandicus filamentous virus (isolate Iceland/Hveragerdi) (SIFV) protein is Putative glycosyltransferase 45 (SIFV0045).